Reading from the N-terminus, the 72-residue chain is Putative DNA-directed RNA polymerase subunit omega (72 aa).

It belongs to the RNA polymerase subunit omega family.

Its subcellular location is the plastid. It is found in the chloroplast. The enzyme catalyses RNA(n) + a ribonucleoside 5'-triphosphate = RNA(n+1) + diphosphate. Functionally, may be involved in RNA polymerase activity. This Cyanidium caldarium (Red alga) protein is Putative DNA-directed RNA polymerase subunit omega (rpoZ).